The sequence spans 254 residues: Small ribosomal subunit protein uS2 (254 aa).

The protein belongs to the universal ribosomal protein uS2 family.

In Borrelia recurrentis (strain A1), this protein is Small ribosomal subunit protein uS2.